The primary structure comprises 524 residues: MQLTLWTYEGPPHVGAMRIAASMRGVHYVLHAPQGDTYADLLFTMIERRGQRPPVTYTTFQARDLGGDTAELVKRHVREAVDRFQPDALLVGESCTAELIQDQPGALAQGMGLTMPVVSLELPAYSKKENWGAAETFYQMVRNLLKEQTPANNQHDPMTWQHQGRRPRVNLLGPSLLGFRCRDDVLEVQKLLTLHGIDVGVVAPLGAGVEDLKRIPDADLNVCLYPEVAESSCSWLERNFGMPFSRTVPIGVGATHDFLVEVHDMLGMEPPAPDEGYRRSRLPWYSESVDSTYLTGKRVFIFGDGSHALAAARICSEELGFTVVGLGTYSREMARPVRAAAKALGLEALISDDYLAVEAAMAKAAPELVLGTQMERHSAKRLGIPCAVISTPMHVQDVPARMSPQMGWEGANVIFDDWVHPLMMGLEEHLIGMFRHDFEFVDGHQSHLGHTGGAGAADHSALTDIPADGDDALHWTADGEAELKKIPFFVRGKVRRNTEAYARDVGCRVINSETLYDAKAHFKA.

Aspartate 36 serves as a coordination point for [4Fe-4S] cluster. Aspartate 290 serves as the catalytic Proton donor. Glycine 425 to leucine 426 contacts substrate.

Belongs to the ChlB/BchB/BchZ family. As to quaternary structure, protochlorophyllide reductase is composed of three subunits; ChlL, ChlN and ChlB. Forms a heterotetramer of two ChlB and two ChlN subunits. It depends on [4Fe-4S] cluster as a cofactor.

The enzyme catalyses chlorophyllide a + oxidized 2[4Fe-4S]-[ferredoxin] + 2 ADP + 2 phosphate = protochlorophyllide a + reduced 2[4Fe-4S]-[ferredoxin] + 2 ATP + 2 H2O. Its pathway is porphyrin-containing compound metabolism; chlorophyll biosynthesis (light-independent). Its function is as follows. Component of the dark-operative protochlorophyllide reductase (DPOR) that uses Mg-ATP and reduced ferredoxin to reduce ring D of protochlorophyllide (Pchlide) to form chlorophyllide a (Chlide). This reaction is light-independent. The NB-protein (ChlN-ChlB) is the catalytic component of the complex. This chain is Light-independent protochlorophyllide reductase subunit B, found in Synechococcus sp. (strain CC9605).